The chain runs to 624 residues: Kelch-like ECH-associated protein 1 (624 aa).

Cys-38 is subject to S-(2-succinyl)cysteine. The 73-residue stretch at 77 to 149 folds into the BTB domain; that stretch reads CDVTLQVKYQ…AYTASISMGE (73 aa). An N5-[4-(S-L-cysteinyl)-5-methyl-1H-imidazol-2-yl]-L-ornithine (Arg-Cys) (interchain with C-151 in KEAP1) cross-link involves residue Arg-135. Cys-151 and Cys-241 each carry S-(2-succinyl)cysteine. Cys-151 bears the S-(2,3-dicarboxypropyl)cysteine; alternate mark. Cys-151 bears the S-nitrosocysteine; alternate mark. Cys-151 participates in a covalent cross-link: N5-[4-(S-L-cysteinyl)-5-methyl-1H-imidazol-2-yl]-L-ornithine (Cys-Arg) (interchain with R-135 in KEAP1). Residues 184-286 enclose the BACK domain; it reads AIGIANFAEQ…TPNFLQMQLQ (103 aa). S-(2,3-dicarboxypropyl)cysteine occurs at positions 257 and 273. Cys-288 and Cys-319 each carry S-(2-succinyl)cysteine. Cys-288 bears the S-(2,3-dicarboxypropyl)cysteine; alternate mark. 6 Kelch repeats span residues 327-372, 373-423, 424-470, 471-517, 518-564, and 565-611; these read LIYT…VVGG, LLYA…VIDG, HIYA…VLNR, LLYA…VLHN, CIYA…VHQG, and RIYV…VTME. Cys-434 carries the S-cGMP-cysteine modification. S-(2-succinyl)cysteine is present on Cys-613.

It belongs to the KEAP1 family. In terms of assembly, component of the BCR(KEAP1) E3 ubiquitin ligase complex, at least composed of 2 molecules of CUL3, 2 molecules of KEAP1, and RBX1. Interacts with NFE2L2/NRF2; the interaction is direct. Forms a ternary complex with NFE2L2/NRF2 and PGAM5. Interacts with (phosphorylated) SQSTM1/p62; the interaction is direct and inactivates the BCR(KEAP1) complex by sequestering it in inclusion bodies, promoting its degradation. Interacts with NFE2L1. Interacts with BPTF and PTMA. Interacts with MAP1LC3B. Interacts indirectly with ENC1. Interacts with SESN1 and SESN2. Interacts with HSP90AA1 and HSP90AB1. Interacts with PGCKA1; this interaction prevents the ubiquitination of KEAP1 by TRIM25, thus protecting KEAP1 from degradation. Non-enzymatic covalent modifications of reactive cysteines by electrophile metabolites inactivate the BCR(KEAP1) complex. Accumulation of fumarate promotes the formation of cysteine S-succination (S-(2-succinyl)cysteine), leading to inactivate the BCR(KEAP1) complex and promote NFE2L2/NRF2 nuclear accumulation and activation. Nitric oxide-dependent 8-Nitro-cGMP formation promotes cysteine guanylation (S-cGMP-cysteine), leading to NFE2L2/NRF2 nuclear accumulation and activation. Itaconate, an anti-inflammatory metabolite generated in response to lipopolysaccharide, alkylates cysteines, activating NFE2L2/NRF2. Methylglyoxal, a reactive metabolite that accumulates when the glycolytic enzyme PGK1 is inhibited, promotes formation of a methylimidazole cross-link between proximal Cys-151 and Arg-135 on another KEAP1 molecule, resulting in an inactive dimer that inactivates the BCR(KEAP1) complex. Post-translationally, degraded via a proteasomal-independent process during selective autophagy: interaction with phosphorylated SQSTM1/p62 sequesters KEAP1 in inclusion bodies, leading to its degradation. In terms of processing, auto-ubiquitinated by the BCR(KEAP1) complex. Quinone-induced oxidative stress, but not sulforaphane, increases its ubiquitination. Ubiquitination and subsequent degradation is most pronounced following prolonged exposure of cells to oxidative stress, particularly in glutathione-deficient cells that are highly susceptible to oxidative stress. Deubiquitinated by USP25; leading to stabilization. Ubiquitinated by TRIM25; leading to degradation upon ER stress.

Its subcellular location is the cytoplasm. The protein localises to the nucleus. The protein operates within protein modification; protein ubiquitination. With respect to regulation, ubiquitin ligase activity of the BCR(KEAP1) complex is inhibited by oxidative stress and electrophile metabolites such as sulforaphane. Electrophile metabolites react with reactive cysteine residues in KEAP1 and trigger non-enzymatic covalent modifications of these cysteine residues, leading to inactivate the ubiquitin ligase activity of the BCR(KEAP1) complex. Selective autophagy also inactivates the BCR(KEAP1) complex via interaction between KEAP1 and SQSTM1/p62, which sequesters the complex in inclusion bodies and promotes its degradation. Functionally, substrate-specific adapter of a BCR (BTB-CUL3-RBX1) E3 ubiquitin ligase complex that regulates the response to oxidative stress by targeting NFE2L2/NRF2 for ubiquitination. KEAP1 acts as a key sensor of oxidative and electrophilic stress: in normal conditions, the BCR(KEAP1) complex mediates ubiquitination and degradation of NFE2L2/NRF2, a transcription factor regulating expression of many cytoprotective genes. In response to oxidative stress, different electrophile metabolites trigger non-enzymatic covalent modifications of highly reactive cysteine residues in KEAP1, leading to inactivate the ubiquitin ligase activity of the BCR(KEAP1) complex, promoting NFE2L2/NRF2 nuclear accumulation and expression of phase II detoxifying enzymes. In response to selective autophagy, KEAP1 is sequestered in inclusion bodies following its interaction with SQSTM1/p62, leading to inactivation of the BCR(KEAP1) complex and activation of NFE2L2/NRF2. The BCR(KEAP1) complex also mediates ubiquitination of SQSTM1/p62, increasing SQSTM1/p62 sequestering activity and degradation. The BCR(KEAP1) complex also targets BPTF and PGAM5 for ubiquitination and degradation by the proteasome. This is Kelch-like ECH-associated protein 1 from Pongo abelii (Sumatran orangutan).